Consider the following 105-residue polypeptide: Integration host factor subunit alpha (105 aa).

This sequence belongs to the bacterial histone-like protein family. Heterodimer of an alpha and a beta chain.

Its function is as follows. This protein is one of the two subunits of integration host factor, a specific DNA-binding protein that functions in genetic recombination as well as in transcriptional and translational control. This chain is Integration host factor subunit alpha, found in Xanthobacter autotrophicus (strain ATCC BAA-1158 / Py2).